The sequence spans 435 residues: Protein phosphatase 2C homolog 2 (435 aa).

The PPM-type phosphatase domain maps to 23–298 (IYGVSAMQGW…DNMTMIIIGL (276 aa)). Residues Asp-71, Gly-72, Asp-240, and Asp-289 each coordinate Mn(2+). Residues 366-435 (DQTEEDRDLP…TSGAPEKSTS (70 aa)) are disordered. The segment covering 381 to 392 (ELPDSARNEREG) has biased composition (basic and acidic residues). The span at 409–418 (GSSASTSEST) shows a compositional bias: low complexity. A compositionally biased stretch (polar residues) spans 419–435 (VTPAGSSTSGAPEKSTS).

This sequence belongs to the PP2C family. The cofactor is Mg(2+). It depends on Mn(2+) as a cofactor.

It localises to the cytoplasm. Its subcellular location is the nucleus. The enzyme catalyses O-phospho-L-seryl-[protein] + H2O = L-seryl-[protein] + phosphate. It catalyses the reaction O-phospho-L-threonyl-[protein] + H2O = L-threonyl-[protein] + phosphate. Dephosphorylating regulator for many key proteins. Dephosphorylates phosphoglycerate kinase pgk1 at least on 'Ser-203' to negatively regulate targeting of pgk1 to the mitochondrion, thereby negatively regulating production of acetyl-CoA and consequently aflatoxin biosynthesis. In Aspergillus flavus (strain ATCC 200026 / FGSC A1120 / IAM 13836 / NRRL 3357 / JCM 12722 / SRRC 167), this protein is Protein phosphatase 2C homolog 2.